Here is a 290-residue protein sequence, read N- to C-terminus: Small ribosomal subunit biogenesis GTPase RsgA (290 aa).

The 158-residue stretch at 63-220 (KNELIRPPIA…IADTPGFSNL (158 aa)) folds into the CP-type G domain. GTP contacts are provided by residues 112-115 (NKFD) and 162-170 (GPSGVGKST). Residues Cys244, Cys249, His251, and Cys257 each coordinate Zn(2+).

It belongs to the TRAFAC class YlqF/YawG GTPase family. RsgA subfamily. In terms of assembly, monomer. Associates with 30S ribosomal subunit, binds 16S rRNA. Zn(2+) is required as a cofactor.

It is found in the cytoplasm. Its function is as follows. One of several proteins that assist in the late maturation steps of the functional core of the 30S ribosomal subunit. Helps release RbfA from mature subunits. May play a role in the assembly of ribosomal proteins into the subunit. Circularly permuted GTPase that catalyzes slow GTP hydrolysis, GTPase activity is stimulated by the 30S ribosomal subunit. This chain is Small ribosomal subunit biogenesis GTPase RsgA, found in Carboxydothermus hydrogenoformans (strain ATCC BAA-161 / DSM 6008 / Z-2901).